Here is a 413-residue protein sequence, read N- to C-terminus: Probable protein phosphatase 2C 78 (413 aa).

The segment at 21–40 is disordered; sequence KKATTTTRRRERSSSQAARR. Positions 111-409 constitute a PPM-type phosphatase domain; that stretch reads KYGVASVCGR…DNVSVVVVDL (299 aa). 4 residues coordinate Mn(2+): Asp153, Gly154, Asp327, and Asp400.

This sequence belongs to the PP2C family. Requires Mg(2+) as cofactor. It depends on Mn(2+) as a cofactor.

It localises to the golgi apparatus. The protein resides in the nucleus. It catalyses the reaction O-phospho-L-seryl-[protein] + H2O = L-seryl-[protein] + phosphate. The enzyme catalyses O-phospho-L-threonyl-[protein] + H2O = L-threonyl-[protein] + phosphate. Its function is as follows. Acts as a negative regulator of abscisic acid (ABA) signaling for stomatal closure in leaves, and controls water loss during leaf senescence. Activated by the NAC029/NAP transcription factor during ABA signaling in senescing leaves. Functions as a negative regulator of osmotic stress and ABA signaling. Acts as a negative regulator of response to drought. This Arabidopsis thaliana (Mouse-ear cress) protein is Probable protein phosphatase 2C 78.